The chain runs to 299 residues: Ribonuclease 3-like protein 3 (299 aa).

One can recognise an RNase III domain in the interval 39 to 183 (VAAVESLLGY…LIGAIYCDSN (145 aa)). The Mg(2+) site is built by glutamate 79, aspartate 169, and glutamate 172. A DRBM domain is found at 209-273 (HPVSELFEFC…AKAALDKLKE (65 aa)). Positions 274-299 (TLGQSQTEPMSAEVSEQFNKIDLTGS) are disordered. The segment covering 275–291 (LGQSQTEPMSAEVSEQF) has biased composition (polar residues).

Mg(2+) serves as cofactor. It depends on Mn(2+) as a cofactor.

In terms of biological role, cleaves double-stranded RNA (dsRNA). This Oryza sativa subsp. japonica (Rice) protein is Ribonuclease 3-like protein 3.